A 187-amino-acid chain; its full sequence is Protein GrpE (187 aa).

Belongs to the GrpE family. Homodimer.

It localises to the cytoplasm. Functionally, participates actively in the response to hyperosmotic and heat shock by preventing the aggregation of stress-denatured proteins, in association with DnaK and GrpE. It is the nucleotide exchange factor for DnaK and may function as a thermosensor. Unfolded proteins bind initially to DnaJ; upon interaction with the DnaJ-bound protein, DnaK hydrolyzes its bound ATP, resulting in the formation of a stable complex. GrpE releases ADP from DnaK; ATP binding to DnaK triggers the release of the substrate protein, thus completing the reaction cycle. Several rounds of ATP-dependent interactions between DnaJ, DnaK and GrpE are required for fully efficient folding. The protein is Protein GrpE of Albidiferax ferrireducens (strain ATCC BAA-621 / DSM 15236 / T118) (Rhodoferax ferrireducens).